A 650-amino-acid chain; its full sequence is Probable Xaa-Pro aminopeptidase P (650 aa).

D447, D458, E556, and E570 together coordinate Mn(2+).

It belongs to the peptidase M24B family. Mn(2+) is required as a cofactor.

It catalyses the reaction Release of any N-terminal amino acid, including proline, that is linked to proline, even from a dipeptide or tripeptide.. Catalyzes the removal of a penultimate prolyl residue from the N-termini of peptides. The sequence is that of Probable Xaa-Pro aminopeptidase P (AMPP) from Phaeosphaeria nodorum (strain SN15 / ATCC MYA-4574 / FGSC 10173) (Glume blotch fungus).